We begin with the raw amino-acid sequence, 64 residues long: Alpha-conotoxin-like Ac1.1a (64 aa).

Positions Met1–Ser21 are cleaved as a signal peptide. Residues Tyr22–Arg47 constitute a propeptide that is removed on maturation. Intrachain disulfides connect Cys51/Cys56 and Cys52/Cys62. At Cys62 the chain carries Cysteine amide.

It belongs to the conotoxin A superfamily. Expressed by the venom duct.

It is found in the secreted. Alpha-conotoxins act on postsynaptic membranes, they bind to the nicotinic acetylcholine receptors (nAChR) and thus inhibit them. This chain is Alpha-conotoxin-like Ac1.1a, found in Conus achatinus (Little frog cone).